A 493-amino-acid polypeptide reads, in one-letter code: Rop guanine nucleotide exchange factor 10 (493 aa).

2 disordered regions span residues Met-1 to Met-45 and Gly-400 to Ala-423. Basic and acidic residues predominate over residues Asp-17–Ala-27. Positions Arg-35–Glu-401 constitute a PRONE domain.

In terms of biological role, guanine-nucleotide exchange factor (GEF) that acts as an activator of Rop (Rho of plants) GTPases by promoting the exchange of GDP for GTP. The sequence is that of Rop guanine nucleotide exchange factor 10 (ROPGEF10) from Arabidopsis thaliana (Mouse-ear cress).